The sequence spans 394 residues: Methane monooxygenase component A beta chain (394 aa).

As to quaternary structure, m.trichosporium has two forms of methane monooxygenase, a soluble and a membrane-bound type. The soluble type consists of four components (A to D): protein A, comprising three chains, in an alpha-2, beta-2, gamma-2 configuration, is a nonheme iron protein containing an unusual mu-hydroxo bridge structure at its active site and interacts with both oxygen and methane.

It carries out the reaction methane + NADH + O2 + H(+) = methanol + NAD(+) + H2O. The enzyme catalyses methane + NADPH + O2 + H(+) = methanol + NADP(+) + H2O. Functionally, responsible for the initial oxygenation of methane to methanol in methanotrophs. It also catalyzes the monohydroxylation of a variety of unactivated alkenes, alicyclic, aromatic and heterocyclic compounds. This is Methane monooxygenase component A beta chain (mmoY) from Methylosinus trichosporium.